Reading from the N-terminus, the 466-residue chain is Glutamate--tRNA ligase 2 (466 aa).

The short motif at 11-21 (PSPTGFLHIGG) is the 'HIGH' region element. The 'KMSKS' region signature appears at 239-243 (KLSKR). An ATP-binding site is contributed by Lys242.

The protein belongs to the class-I aminoacyl-tRNA synthetase family. Glutamate--tRNA ligase type 1 subfamily. As to quaternary structure, monomer.

It is found in the cytoplasm. The catalysed reaction is tRNA(Glu) + L-glutamate + ATP = L-glutamyl-tRNA(Glu) + AMP + diphosphate. In terms of biological role, catalyzes the attachment of glutamate to tRNA(Glu) in a two-step reaction: glutamate is first activated by ATP to form Glu-AMP and then transferred to the acceptor end of tRNA(Glu). The chain is Glutamate--tRNA ligase 2 from Roseobacter denitrificans (strain ATCC 33942 / OCh 114) (Erythrobacter sp. (strain OCh 114)).